Reading from the N-terminus, the 333-residue chain is Glyceraldehyde-3-phosphate dehydrogenase (333 aa).

The residue at position 1 (serine 1) is an N-acetylserine. NAD(+)-binding positions include 10–11 (RI), aspartate 31, and serine 118. D-glyceraldehyde 3-phosphate-binding positions include 147-149 (SCT), threonine 178, 207-208 (TG), and arginine 230. The active-site Nucleophile is cysteine 148. Position 312 (asparagine 312) interacts with NAD(+).

The protein belongs to the glyceraldehyde-3-phosphate dehydrogenase family. Homotetramer.

It is found in the cytoplasm. It carries out the reaction D-glyceraldehyde 3-phosphate + phosphate + NAD(+) = (2R)-3-phospho-glyceroyl phosphate + NADH + H(+). It functions in the pathway carbohydrate degradation; glycolysis; pyruvate from D-glyceraldehyde 3-phosphate: step 1/5. The protein is Glyceraldehyde-3-phosphate dehydrogenase of Homarus americanus (American lobster).